The chain runs to 291 residues: MASLKDLRNRIASVKATQKITKAMQMVAAAKLRRAQMAAEAARPYAERMDTVLGNLAAGIVGAGQAPVLIAGTGQSQKHLLLVCTGERGLCGAFNTSIVRLAREKAQQLIGEGKDVTFFCVGRKGYDQLRRTYPDRIIELVDLRSVRTLSFKNASDIASKILTLLDQGAFDVCTLFYSNFKSVISQIPTAQQIIPAVFEAQDEGEGGPVYEYEPAEEDILADLLPRNIAVQIFRALLENQASFYGSQMSAMDNATRNAGDMIKKQTLIYNRTRQAMITKELIEIISGAEAL.

Belongs to the ATPase gamma chain family. F-type ATPases have 2 components, CF(1) - the catalytic core - and CF(0) - the membrane proton channel. CF(1) has five subunits: alpha(3), beta(3), gamma(1), delta(1), epsilon(1). CF(0) has three main subunits: a, b and c.

The protein localises to the cell inner membrane. Produces ATP from ADP in the presence of a proton gradient across the membrane. The gamma chain is believed to be important in regulating ATPase activity and the flow of protons through the CF(0) complex. This Xanthobacter autotrophicus (strain ATCC BAA-1158 / Py2) protein is ATP synthase gamma chain.